Consider the following 626-residue polypeptide: MSEETLSFQAEVSKLLDIVVHSLYSDRKIFLRELISNASDACDKLRYEGLTQPALLEGDGAFRIRLSIDAEAGTLTIADNGIGMNRHELIENLGTIARSGTQAFAEALKAKSQAASGDVSLIGQFGVGFYSAFMVADKVEVVTRRAGEAQGWRWSSDGKGSFSVSEVEGAGRGAAITLHLREDARDFLDEHRLREIVKTYSDHIAIPVDYAGKEGEPERLNEASALWTRPRDQITDEQYAEFYHHVAHGFETPWHTLHYRAEGKLEYTALLFVPGQQPFDLFTQDRKPRVKLYVNRVFITDDCEELLPSYLRFVRGVVDSSDLPLNVSREMLQDDPRLRKIKGGLTKRLIDDLAKRARDDESAYLTFWENFGAVLKEGIYEDFERKEDLVALARFRTTASDTPVSLETVIGRMKEGQSALYYITGDDATALARSPQVEGFVARGVEVLLLTDPIDEFWVSAVPKVGDTALKAVAQGSADLERLALIDGKQPPDDAEHAPAETAKMDALIAAMKAALGTAVADVRVSARLTDSPVCLVAKEGAMSLHLQKLLRQANQGSELSGDRVLEINPRHALVKTLAERAATGGSVDEAALLLMDQARILEGEAPADAIAFARRLTEVMGKGLI.

The tract at residues 1–329 (MSEETLSFQA…SSDLPLNVSR (329 aa)) is a; substrate-binding. Residues 330-549 (EMLQDDPRLR…EGAMSLHLQK (220 aa)) are b. Residues 550-626 (LLRQANQGSE…LTEVMGKGLI (77 aa)) form a c region.

The protein belongs to the heat shock protein 90 family. As to quaternary structure, homodimer.

The protein localises to the cytoplasm. In terms of biological role, molecular chaperone. Has ATPase activity. This chain is Chaperone protein HtpG, found in Rhodospirillum rubrum (strain ATCC 11170 / ATH 1.1.1 / DSM 467 / LMG 4362 / NCIMB 8255 / S1).